A 1013-amino-acid chain; its full sequence is Adhesion G-protein coupled receptor G2 (1013 aa).

Residues 1–37 form the signal peptide; the sequence is MLFSGGQYSPVGRPEEVLLIYKIFLVIICFHAILVTS. Over 38–623 the chain is Extracellular; it reads LKENAGNSSL…TSLPPSQMMA (586 aa). Asn44, Asn78, Asn92, Asn104, Asn128, Asn137, Asn155, Asn179, Asn187, Asn366, Asn431, Asn452, Asn457, Asn524, Asn538, Asn543, Asn547, and Asn593 each carry an N-linked (GlcNAc...) asparagine glycan. The GAIN-B domain occupies 457 to 615; it reads NTTTFAAQDP…GILLDLSRTS (159 aa). Cystine bridges form between Cys566–Cys597 and Cys585–Cys599. A GPS region spans residues 566–615; that stretch reads CVFWDLNRNGGRGGWSSDGCSVKEKRMNETICTCSHLTSFGILLDLSRTS. Residues 604-615 are stachel; that stretch reads SFGILLDLSRTS. Residues 624-644 traverse the membrane as a helical segment; the sequence is LTFITYIGCGLSSIFLSVTLV. Residues 645–663 lie on the Cytoplasmic side of the membrane; the sequence is TYIAFEKIRRDYPSKILIQ. A helical membrane pass occupies residues 664–684; sequence LCAALLLLNLVFLLDSWIALY. The Extracellular portion of the chain corresponds to 685-688; it reads NARG. The helical transmembrane segment at 689–709 threads the bilayer; sequence FCISVAVFLHYFLLVSFTWMG. Cys690 and Cys774 are disulfide-bonded. Over 710–733 the chain is Cytoplasmic; that stretch reads LEAFHMYLALVKVFNTYIRKYILK. A helical membrane pass occupies residues 734-754; that stretch reads FCIVGWGIPAVVVSIVLTISP. At 755–785 the chain is on the extracellular side; that stretch reads DNYGIGSYGKFPNGTPDDFCWINSSVVFYIT. N-linked (GlcNAc...) asparagine glycosylation is present at Asn777. The chain crosses the membrane as a helical span at residues 786 to 806; the sequence is VVGYFCVIFLLNVSMFIVVLV. Residues 807–830 are Cytoplasmic-facing; that stretch reads QLCRIKKKKQLGAQRKTSIQDLRS. Residues 831 to 851 form a helical membrane-spanning segment; that stretch reads IAGLTFLLGITWGFAFFAWGP. At 852 to 853 the chain is on the extracellular side; the sequence is VN. Asn853 carries N-linked (GlcNAc...) asparagine glycosylation. A helical membrane pass occupies residues 854-874; that stretch reads LTFMYLFAIFNTLQGFFIFIF. Asn864 provides a ligand contact to 3beta-hydroxyandrost-5-en-17-one. Topologically, residues 875–1013 are cytoplasmic; that stretch reads YCAAKENVRK…RGSLHFIEQM (139 aa). Ser1006 carries the post-translational modification Phosphoserine.

It belongs to the G-protein coupled receptor 2 family. Adhesion G-protein coupled receptor (ADGR) subfamily. In terms of assembly, heterodimer of 2 chains generated by proteolytic processing; the large extracellular N-terminal fragment and the membrane-bound C-terminal fragment predominantly remain associated and non-covalently linked. Interacts with CFTR. Post-translationally, proteolytically cleaved into 2 subunits, an extracellular subunit and a seven-transmembrane subunit. In terms of processing, highly glycosylated. Epididymis-specific expression (at protein level). Associated with apical membranes of efferent ductule and proximal epididymal duct epithelia.

The protein localises to the apical cell membrane. Its activity is regulated as follows. Forms a heterodimer of 2 chains generated by proteolytic processing that remain associated through non-covalent interactions mediated by the GAIN-B domain. In the inactivated receptor, the Stachel sequence (also named stalk) is embedded in the GAIN-B domain, where it adopts a beta-strand conformation. On activation, the Stachel moves into the 7 transmembrane region and adopts a twisted hook-shaped configuration that forms contacts within the receptor, leading to coupling of a G-alpha protein, which activates signaling. The cleaved GAIN-B and N-terminal domains can then dissociate from the rest of the receptor. Deoxycorticosterone (DOC) acts as an antagonist of ADGRG2. In terms of biological role, adhesion G-protein coupled receptor (aGPCR) for steroid hormones, such as dehydroepiandrosterone (DHEA; also named 3beta-hydroxyandrost-5-en-17-one) and androstenedione. Involved in a signal transduction pathway controlling epididymal function and male fertility. Ligand binding causes a conformation change that triggers signaling via guanine nucleotide-binding proteins (G proteins) and modulates the activity of downstream effectors, such as adenylate cyclase. ADGRG2 is coupled to G(s) G proteins and mediates activation of adenylate cyclase activity. Also able to couple with G(q) G proteins in vitro. May regulate fluid exchange within epididymis. The protein is Adhesion G-protein coupled receptor G2 of Rattus norvegicus (Rat).